We begin with the raw amino-acid sequence, 210 residues long: Pyridoxine/pyridoxamine 5'-phosphate oxidase (210 aa).

Substrate contacts are provided by residues 7–10 (REDY) and Lys65. Residues 60–65 (RVVLLK), 75–76 (FT), Arg81, Lys82, and Gln104 contribute to the FMN site. Substrate-binding residues include Tyr122, Arg126, and Ser130. Residues 139-140 (QS) and Trp183 contribute to the FMN site. 189–191 (RLH) serves as a coordination point for substrate. Arg193 is a binding site for FMN.

It belongs to the pyridoxamine 5'-phosphate oxidase family. As to quaternary structure, homodimer. The cofactor is FMN.

It carries out the reaction pyridoxamine 5'-phosphate + O2 + H2O = pyridoxal 5'-phosphate + H2O2 + NH4(+). The catalysed reaction is pyridoxine 5'-phosphate + O2 = pyridoxal 5'-phosphate + H2O2. It participates in cofactor metabolism; pyridoxal 5'-phosphate salvage; pyridoxal 5'-phosphate from pyridoxamine 5'-phosphate: step 1/1. It functions in the pathway cofactor metabolism; pyridoxal 5'-phosphate salvage; pyridoxal 5'-phosphate from pyridoxine 5'-phosphate: step 1/1. Catalyzes the oxidation of either pyridoxine 5'-phosphate (PNP) or pyridoxamine 5'-phosphate (PMP) into pyridoxal 5'-phosphate (PLP). The chain is Pyridoxine/pyridoxamine 5'-phosphate oxidase from Actinobacillus succinogenes (strain ATCC 55618 / DSM 22257 / CCUG 43843 / 130Z).